A 103-amino-acid polypeptide reads, in one-letter code: Small ribosomal subunit protein uS10 (103 aa).

This sequence belongs to the universal ribosomal protein uS10 family. As to quaternary structure, part of the 30S ribosomal subunit.

Involved in the binding of tRNA to the ribosomes. The protein is Small ribosomal subunit protein uS10 of Psychrobacter sp. (strain PRwf-1).